The chain runs to 782 residues: Coiled-coil alpha-helical rod protein 1 (782 aa).

Basic and acidic residues-rich tracts occupy residues 62–74 (ERDVSSDRQEPGR) and 208–218 (ETRRAGEAKEL). Disordered regions lie at residues 62-82 (ERDVSSDRQEPGRRGRSWGLE) and 182-218 (LTQAHEEALSSLTSKAEGLEKSLSSLETRRAGEAKEL). 3 coiled-coil regions span residues 82-314 (EGSQ…ELTR), 344-437 (LMVQ…NAVS), and 498-691 (VADV…QQEG).

It localises to the cytoplasm. The protein localises to the nucleus. Functionally, may be a regulator of keratinocyte proliferation or differentiation. The sequence is that of Coiled-coil alpha-helical rod protein 1 (CCHCR1) from Pan paniscus (Pygmy chimpanzee).